The sequence spans 144 residues: Mannitol-specific phosphotransferase enzyme IIA component (144 aa).

A PTS EIIA type-2 domain is found at Glu-3–Ala-142. The Tele-phosphohistidine intermediate role is filled by His-63. His-63 bears the Phosphohistidine; by HPr mark.

Homodimer or homotrimer. Seems to be a monomer when not phosphorylated.

The protein localises to the cytoplasm. The phosphoenolpyruvate-dependent sugar phosphotransferase system (sugar PTS), a major carbohydrate active transport system, catalyzes the phosphorylation of incoming sugar substrates concomitantly with their translocation across the cell membrane. The enzyme II CmtAB PTS system is involved in D-mannitol transport. In Staphylococcus aureus (strain COL), this protein is Mannitol-specific phosphotransferase enzyme IIA component (mtlF).